A 407-amino-acid polypeptide reads, in one-letter code: Serine/threonine transporter SstT (407 aa).

9 helical membrane passes run 12-32 (GNLI…GISS), 42-62 (LGIL…FILI), 81-101 (IIIL…LANF), 141-161 (ALSS…GIAL), 179-199 (VLKI…GLVA), 218-238 (ILLV…IVFF), 245-267 (FPLI…SSAA), 288-308 (ISIP…IAIL), and 330-350 (IIAT…LLLI).

The protein belongs to the dicarboxylate/amino acid:cation symporter (DAACS) (TC 2.A.23) family.

The protein resides in the cell inner membrane. It catalyses the reaction L-serine(in) + Na(+)(in) = L-serine(out) + Na(+)(out). It carries out the reaction L-threonine(in) + Na(+)(in) = L-threonine(out) + Na(+)(out). Its function is as follows. Involved in the import of serine and threonine into the cell, with the concomitant import of sodium (symport system). The polypeptide is Serine/threonine transporter SstT (Campylobacter jejuni subsp. jejuni serotype O:2 (strain ATCC 700819 / NCTC 11168)).